The following is a 442-amino-acid chain: MITPKVLSGFKDRLPKDAIQKAQLLAKVSVVFQSFGFVPIETPHLEYAQTLLPDASSDIQKEIYRFKDHGDRDVALRFDLTVPLARFVSLHHQTLGMPFKRYAIGNVFRGERAQKGRYREFTQCDFDFIGSESLVCDAEIIQVIVASLKALDLEDFCVSINHRKILNGICEYFGISQVNEALRIVDKLEKIGLNGVEEELKKECGLNSNTIKELLELIQIKQNDLSHAEFFEKIAYLKDYNENLKKGIQDLERLYQLLGDLQISQNLYKIDFSIARGLGYYTGIVYETTLNEMKSLGSVCSGGRYDHLTKNFSKENLQGVGASIGIDRLIVALSEMQLLDERSTQAKVLIACMHEEYFSYANRLAESLRQSGIFSEVYPEAQKIKKPFSYANHKGHEFVAVIGEEEFKSETLSLKNMHSGMQLNCLSFLKALEIIGENDEDL.

Belongs to the class-II aminoacyl-tRNA synthetase family. In terms of assembly, homodimer.

The protein resides in the cytoplasm. The enzyme catalyses tRNA(His) + L-histidine + ATP = L-histidyl-tRNA(His) + AMP + diphosphate + H(+). This chain is Histidine--tRNA ligase (hisS), found in Helicobacter pylori (strain ATCC 700392 / 26695) (Campylobacter pylori).